The primary structure comprises 331 residues: Ribosomal RNA small subunit methyltransferase H (331 aa).

S-adenosyl-L-methionine is bound by residues 39–41, Asp-56, Phe-83, Asp-100, and Gln-107; that span reads GGY.

It belongs to the methyltransferase superfamily. RsmH family.

It localises to the cytoplasm. It catalyses the reaction cytidine(1402) in 16S rRNA + S-adenosyl-L-methionine = N(4)-methylcytidine(1402) in 16S rRNA + S-adenosyl-L-homocysteine + H(+). Specifically methylates the N4 position of cytidine in position 1402 (C1402) of 16S rRNA. This chain is Ribosomal RNA small subunit methyltransferase H, found in Bartonella bacilliformis (strain ATCC 35685 / KC583 / Herrer 020/F12,63).